Reading from the N-terminus, the 121-residue chain is Surface glycoprotein CD59 homolog (121 aa).

The N-terminal stretch at 1–19 (MYILFTLVLTFVFCKPIHS) is a signal peptide. One can recognise a UPAR/Ly6 domain in the interval 20–104 (LQCYNCSHST…ENIKRTISDK (85 aa)). 5 cysteine pairs are disulfide-bonded: Cys-22–Cys-45, Cys-25–Cys-32, Cys-38–Cys-58, Cys-64–Cys-82, and Cys-83–Cys-88. Residue Asn-24 is glycosylated (N-linked (GlcNAc...) asparagine; by host). Residue Asn-96 is the site of GPI-anchor amidated asparagine; by host attachment. The propeptide at 97–121 (IKRTISDKALLLLALFLVTAWNFPL) is removed in mature form.

Its subcellular location is the host cell membrane. The chain is Surface glycoprotein CD59 homolog (15) from Saimiriine herpesvirus 2 (strain 11) (SaHV-2).